The following is a 298-amino-acid chain: ATP synthase F(1) complex subunit gamma, mitochondrial (298 aa).

Residues methionine 1 to methionine 25 constitute a mitochondrion transit peptide. Residue lysine 39 is modified to N6-acetyllysine. Lysine 49 bears the N6-succinyllysine mark. Lysine 55 is subject to N6-acetyllysine. The residue at position 115 (lysine 115) is an N6-acetyllysine; alternate. N6-succinyllysine; alternate is present on lysine 115. Residue serine 146 is modified to Phosphoserine. Lysine 154 carries the N6-acetyllysine; alternate modification. Lysine 154 carries the post-translational modification N6-succinyllysine; alternate. Position 197 is an N6-acetyllysine (lysine 197). Lysine 270 is modified (N6-succinyllysine).

It belongs to the ATPase gamma chain family. Component of the ATP synthase complex composed at least of ATP5F1A/subunit alpha, ATP5F1B/subunit beta, ATP5MC1/subunit c (homooctomer), MT-ATP6/subunit a, MT-ATP8/subunit 8, ATP5ME/subunit e, ATP5MF/subunit f, ATP5MG/subunit g, ATP5MK/subunit k, ATP5MJ/subunit j, ATP5F1C/subunit gamma, ATP5F1D/subunit delta, ATP5F1E/subunit epsilon, ATP5PF/subunit F6, ATP5PB/subunit b, ATP5PD/subunit d, ATP5PO/subunit OSCP. ATP synthase complex consists of a soluble F(1) head domain (subunits alpha(3) and beta(3)) - the catalytic core - and a membrane F(0) domain - the membrane proton channel (subunits c, a, 8, e, f, g, k and j). These two domains are linked by a central stalk (subunits gamma, delta, and epsilon) rotating inside the F1 region and a stationary peripheral stalk (subunits F6, b, d, and OSCP). Interacts with FLVCR2; this interaction occurs in the absence of heme and is disrupted upon heme binding.

It localises to the mitochondrion inner membrane. Subunit gamma, of the mitochondrial membrane ATP synthase complex (F(1)F(0) ATP synthase or Complex V) that produces ATP from ADP in the presence of a proton gradient across the membrane which is generated by electron transport complexes of the respiratory chain. ATP synthase complex consist of a soluble F(1) head domain - the catalytic core - and a membrane F(1) domain - the membrane proton channel. These two domains are linked by a central stalk rotating inside the F(1) region and a stationary peripheral stalk. During catalysis, ATP synthesis in the catalytic domain of F(1) is coupled via a rotary mechanism of the central stalk subunits to proton translocation. In vivo, can only synthesize ATP although its ATP hydrolase activity can be activated artificially in vitro. With the central stalk subunit delta, is essential for the biogenesis of F(1) catalytic part of the ATP synthase complex namely in the formation of F1 assembly intermediate. This is ATP synthase F(1) complex subunit gamma, mitochondrial from Bos taurus (Bovine).